Here is a 469-residue protein sequence, read N- to C-terminus: Ribulose bisphosphate carboxylase large chain (469 aa).

The residue at position 8 (Lys8) is an N6,N6,N6-trimethyllysine. 2 residues coordinate substrate: Asn117 and Thr167. The Proton acceptor role is filled by Lys169. Lys171 contacts substrate. Residues Lys195, Asp197, and Glu198 each coordinate Mg(2+). Lys195 carries the N6-carboxylysine modification. His288 serves as the catalytic Proton acceptor. Substrate contacts are provided by Arg289, His321, and Ser373.

It belongs to the RuBisCO large chain family. Type I subfamily. In terms of assembly, heterohexadecamer of 8 large chains and 8 small chains; disulfide-linked. The disulfide link is formed within the large subunit homodimers. Mg(2+) is required as a cofactor. Post-translationally, the disulfide bond which can form in the large chain dimeric partners within the hexadecamer appears to be associated with oxidative stress and protein turnover.

It localises to the plastid. It is found in the chloroplast. The enzyme catalyses 2 (2R)-3-phosphoglycerate + 2 H(+) = D-ribulose 1,5-bisphosphate + CO2 + H2O. The catalysed reaction is D-ribulose 1,5-bisphosphate + O2 = 2-phosphoglycolate + (2R)-3-phosphoglycerate + 2 H(+). Its function is as follows. RuBisCO catalyzes two reactions: the carboxylation of D-ribulose 1,5-bisphosphate, the primary event in carbon dioxide fixation, as well as the oxidative fragmentation of the pentose substrate in the photorespiration process. Both reactions occur simultaneously and in competition at the same active site. This is Ribulose bisphosphate carboxylase large chain from Persicaria senticosa (Knotweed).